Reading from the N-terminus, the 132-residue chain is L-ectoine synthase (132 aa).

It belongs to the ectoine synthase family.

It catalyses the reaction (2S)-4-acetamido-2-aminobutanoate = L-ectoine + H2O. It participates in amine and polyamine biosynthesis; ectoine biosynthesis; L-ectoine from L-aspartate 4-semialdehyde: step 3/3. Its function is as follows. Catalyzes the circularization of gamma-N-acetyl-alpha,gamma-diaminobutyric acid (ADABA) to ectoine (1,4,5,6-tetrahydro-2-methyl-4-pyrimidine carboxylic acid), which is an excellent osmoprotectant. The polypeptide is L-ectoine synthase (Bordetella avium (strain 197N)).